Here is a 313-residue protein sequence, read N- to C-terminus: Methionyl-tRNA formyltransferase (313 aa).

Residue 110-113 coordinates (6S)-5,6,7,8-tetrahydrofolate; sequence SLLP.

It belongs to the Fmt family.

The enzyme catalyses L-methionyl-tRNA(fMet) + (6R)-10-formyltetrahydrofolate = N-formyl-L-methionyl-tRNA(fMet) + (6S)-5,6,7,8-tetrahydrofolate + H(+). Attaches a formyl group to the free amino group of methionyl-tRNA(fMet). The formyl group appears to play a dual role in the initiator identity of N-formylmethionyl-tRNA by promoting its recognition by IF2 and preventing the misappropriation of this tRNA by the elongation apparatus. This Lysinibacillus sphaericus (strain C3-41) protein is Methionyl-tRNA formyltransferase.